A 287-amino-acid chain; its full sequence is X-box-binding protein 1 (287 aa).

Residues 61–117 enclose the bZIP domain; that stretch reads EEKMDRRKLKNRVAAQNARDKKKERSAKIEDVMRDLVEENRRLRAENERLRRQNKNL. Positions 63–87 are disordered; sequence KMDRRKLKNRVAAQNARDKKKERSA. Positions 63 to 88 are basic motif; it reads KMDRRKLKNRVAAQNARDKKKERSAK. A compositionally biased stretch (basic and acidic residues) spans 78-87; that stretch reads ARDKKKERSA. The segment at 89–117 is leucine-zipper; that stretch reads IEDVMRDLVEENRRLRAENERLRRQNKNL.

Interacts with SUMO-conjugating enzyme ubc-9; the interaction is direct. Post-translationally, sumoylated. Sumoylation may negatively modulate the transcription of genes involved in the ER-stress-response.

The protein resides in the nucleus. Its function is as follows. Required for transcriptional regulation of the unfolded protein response (UPR) in the endoplasmic reticulum (ER) under stressed conditions, acting downstream of ire-1, and also maintaining ER homeostasis via a negative feedback loop, in parallel with ER kinase pek-1. May also regulate Golgi protein trafficking distal to the ER. Protects the host organism from the detrimental effects of mounting an innate immune response to microbes, such as the Gram-negative bacterium P.aeruginosa, probably by modulating the UPR. In terms of biological role, plays a role in the unconventional cytoplasmic splicing processing of its own mRNA triggered by the endoplasmic reticulum (ER) transmembrane endoribonuclease ire-1: upon ER stress, the emerging xbp-1 polypeptide chain, as part of a mRNA-ribosome-nascent chain (R-RNC) complex, cotranslationally recruits its own unprocessed mRNA through transient docking to the ER membrane and translational pausing, therefore facilitating efficient ire-1-mediated xbp-1 mRNA isoform 2 production. Functions as a stress-inducible potent transcriptional activator during endoplasmic reticulum (ER) stress by inducing unfolded protein response (UPR) target genes via binding to the UPR element (UPRE). Plays a role in modulation of the UPR, lipid metabolism, proteostasis, and lifespan. In neurons, rescues stress resistance, increases longevity, and, drives expression of lysosomal genes in the intestine and activates the UPR in distal, non-neuronal cell types through a cell-nonautonomous mechanism. In neurons or intestine, plays a role in protection against proteotoxicity, acting via positive modulation of genes involved in lysosomal function, including lipases and the fatty-acid desaturase fat-6. Protection against proteotoxicity in neurons is dependent upon the transcription factor atf-6. The chain is X-box-binding protein 1 from Caenorhabditis elegans.